An 84-amino-acid chain; its full sequence is Large ribosomal subunit protein bL27 (84 aa).

Residues 1–22 (MAHKKAGGSTRNGRDSESKRLG) form a disordered region.

This sequence belongs to the bacterial ribosomal protein bL27 family.

The chain is Large ribosomal subunit protein bL27 from Shewanella sp. (strain MR-4).